The sequence spans 240 residues: Uridylate kinase (240 aa).

Position 12 to 15 (12 to 15) interacts with ATP; that stretch reads KLSG. Gly-54 lines the UMP pocket. ATP contacts are provided by Gly-55 and Arg-59. Residues Asp-74 and 135-142 contribute to the UMP site; that span reads TGNPFFTT. ATP-binding residues include Thr-162, Tyr-168, and Asp-171.

Belongs to the UMP kinase family. In terms of assembly, homohexamer.

It is found in the cytoplasm. It catalyses the reaction UMP + ATP = UDP + ADP. It functions in the pathway pyrimidine metabolism; CTP biosynthesis via de novo pathway; UDP from UMP (UMPK route): step 1/1. Its activity is regulated as follows. Inhibited by UTP. Functionally, catalyzes the reversible phosphorylation of UMP to UDP. This Xanthomonas campestris pv. campestris (strain ATCC 33913 / DSM 3586 / NCPPB 528 / LMG 568 / P 25) protein is Uridylate kinase.